Consider the following 653-residue polypeptide: Elongation factor 4 (653 aa).

Residues 1–30 are disordered; sequence MRTPCSQHRRDRPSAIGSQLPDADTLDTRQ. Positions 50–231 constitute a tr-type G domain; the sequence is AQIRNFCIIA…EVVRQVPPPQ (182 aa). Residues 62–67 and 178–181 contribute to the GTP site; these read DHGKST and NKID.

This sequence belongs to the TRAFAC class translation factor GTPase superfamily. Classic translation factor GTPase family. LepA subfamily.

Its subcellular location is the cell membrane. The catalysed reaction is GTP + H2O = GDP + phosphate + H(+). Required for accurate and efficient protein synthesis under certain stress conditions. May act as a fidelity factor of the translation reaction, by catalyzing a one-codon backward translocation of tRNAs on improperly translocated ribosomes. Back-translocation proceeds from a post-translocation (POST) complex to a pre-translocation (PRE) complex, thus giving elongation factor G a second chance to translocate the tRNAs correctly. Binds to ribosomes in a GTP-dependent manner. The chain is Elongation factor 4 from Mycobacterium bovis (strain ATCC BAA-935 / AF2122/97).